Reading from the N-terminus, the 435-residue chain is Enolase (435 aa).

Q163 is a (2R)-2-phosphoglycerate binding site. Residue E205 is the Proton donor of the active site. 3 residues coordinate Mg(2+): D243, E292, and D319. (2R)-2-phosphoglycerate is bound by residues K344, R373, S374, and K395. The Proton acceptor role is filled by K344.

Belongs to the enolase family. In terms of assembly, homooctamer, a tetramer of homodimers. Requires Mg(2+) as cofactor.

Its subcellular location is the cytoplasm. The protein localises to the secreted. It localises to the cell surface. The protein resides in the cell wall. The catalysed reaction is (2R)-2-phosphoglycerate = phosphoenolpyruvate + H2O. It functions in the pathway carbohydrate degradation; glycolysis; pyruvate from D-glyceraldehyde 3-phosphate: step 4/5. Functionally, catalyzes the reversible conversion of 2-phosphoglycerate (2-PG) into phosphoenolpyruvate (PEP). It is essential for the degradation of carbohydrates via glycolysis. 'Moonlights' as a plasminogen receptor. Binds plasminogen and more weakly plasmin when expressed on the bacterial cell surface; probably has more than one plasmin(ogen) binding site, may bind via Lys residues. Plasminogen binding potentially allows the bacterium to acquire surface-associated proteolytic activity, which in turn contributes to tissue invasion and virulence. The chain is Enolase from Streptococcus pyogenes serotype M6 (strain ATCC BAA-946 / MGAS10394).